We begin with the raw amino-acid sequence, 166 residues long: MAAATFWFVLRGWRTGVPPGCGLRRLSQTQGTPDYPRFLESVDEYRFVERLLPPTSIPKPPKHEHYPTPCGWQPPRDPPPNLPYFVRRSRMHNIPVYRDITHGNRQMTVIRKVEGDIWALQKDVEDFLSPLLGKTPITQVNEVTGTLRIKGYFDQQLKAWLLEKGF.

The protein belongs to the mitochondrion-specific ribosomal protein mL49 family. As to quaternary structure, component of the mitochondrial ribosome large subunit (39S) which comprises a 16S rRNA and about 50 distinct proteins. Interacts with OXA1L.

It localises to the mitochondrion. The protein is Large ribosomal subunit protein mL49 (MRPL49) of Bos taurus (Bovine).